A 370-amino-acid chain; its full sequence is Coiled-coil domain-containing protein 89 (370 aa).

The tract at residues 1-21 (MPQEEKTLRMDTPPPDEILGK) is disordered. The residue at position 12 (threonine 12) is a Phosphothreonine. Residues 36–346 (KEMDGLREAL…YDELRLQSEA (311 aa)) adopt a coiled-coil conformation.

Belongs to the CCDC89 family. As to quaternary structure, interacts with HEY1. As to expression, expression is restricted to the adult testis, where localization is almost exclusive to round spermatids.

It localises to the cytoplasm. The protein localises to the nucleus. In Mus musculus (Mouse), this protein is Coiled-coil domain-containing protein 89.